The primary structure comprises 627 residues: 1-deoxy-D-xylulose-5-phosphate synthase (627 aa).

Residues histidine 80 and glycine 121 to serine 123 contribute to the thiamine diphosphate site. Aspartate 152 lines the Mg(2+) pocket. Thiamine diphosphate-binding positions include glycine 153 to alanine 154, asparagine 181, tyrosine 288, and glutamate 370. Asparagine 181 contributes to the Mg(2+) binding site.

This sequence belongs to the transketolase family. DXPS subfamily. Homodimer. Requires Mg(2+) as cofactor. It depends on thiamine diphosphate as a cofactor.

It carries out the reaction D-glyceraldehyde 3-phosphate + pyruvate + H(+) = 1-deoxy-D-xylulose 5-phosphate + CO2. It functions in the pathway metabolic intermediate biosynthesis; 1-deoxy-D-xylulose 5-phosphate biosynthesis; 1-deoxy-D-xylulose 5-phosphate from D-glyceraldehyde 3-phosphate and pyruvate: step 1/1. Functionally, catalyzes the acyloin condensation reaction between C atoms 2 and 3 of pyruvate and glyceraldehyde 3-phosphate to yield 1-deoxy-D-xylulose-5-phosphate (DXP). The chain is 1-deoxy-D-xylulose-5-phosphate synthase from Aliivibrio fischeri (strain ATCC 700601 / ES114) (Vibrio fischeri).